Reading from the N-terminus, the 447-residue chain is UDP-glucosyl transferase 79T1 (447 aa).

The active-site Proton acceptor is His-18. Catalysis depends on Asp-116, which acts as the Charge relay. Residues Ser-265, Trp-323, Val-324, His-341, Thr-346, and Glu-349 each coordinate UDP.

Belongs to the UDP-glycosyltransferase family. As to expression, mainly expressed in flowers, flower buds and young leaves, and, to a lesser extent, in old leaves, stems and roots.

The protein operates within secondary metabolite biosynthesis; terpenoid biosynthesis. Functionally, component of the oleanane-type triterpene saponins (e.g. saponarioside A and saponarioside B) biosynthetic pathway, leading to the production of natural products with detergent properties used as traditional sources of soap. A glycosyltransferase that mediates the conversion of QA-triF to QA-triFR via the elongation of the C-28 sugar chain with a deoxyhexose on the D-fucose moiety. In Saponaria officinalis (Common soapwort), this protein is UDP-glucosyl transferase 79T1.